Reading from the N-terminus, the 265-residue chain is Putative hydro-lyase Teth514_1597 (265 aa).

The protein belongs to the D-glutamate cyclase family.

In Thermoanaerobacter sp. (strain X514), this protein is Putative hydro-lyase Teth514_1597.